Reading from the N-terminus, the 280-residue chain is Large ribosomal subunit protein uL2 (280 aa).

Disordered stretches follow at residues 1 to 25 (MGIRKYRPMTPGTRQRSGADFAEVT) and 230 to 280 (HPHG…SGRG). Residues 257-280 (KTRKRRKPSSKFIIRRRKTASGRG) show a composition bias toward basic residues.

This sequence belongs to the universal ribosomal protein uL2 family. Part of the 50S ribosomal subunit. Forms a bridge to the 30S subunit in the 70S ribosome.

In terms of biological role, one of the primary rRNA binding proteins. Required for association of the 30S and 50S subunits to form the 70S ribosome, for tRNA binding and peptide bond formation. It has been suggested to have peptidyltransferase activity; this is somewhat controversial. Makes several contacts with the 16S rRNA in the 70S ribosome. This Gloeobacter violaceus (strain ATCC 29082 / PCC 7421) protein is Large ribosomal subunit protein uL2.